A 275-amino-acid polypeptide reads, in one-letter code: Acetyl-coenzyme A carboxylase carboxyl transferase subunit beta (275 aa).

Residues 21–275 (GLWIKCQCGA…IKIIGMHQAG (255 aa)) enclose the CoA carboxyltransferase N-terminal domain. Positions 26, 28, 44, and 47 each coordinate Zn(2+). Residues 26 to 47 (CQCGAILFAKDLERNLKVCQKC) form a C4-type zinc finger.

This sequence belongs to the AccD/PCCB family. As to quaternary structure, acetyl-CoA carboxylase is a heterohexamer composed of biotin carboxyl carrier protein (AccB), biotin carboxylase (AccC) and two subunits each of ACCase subunit alpha (AccA) and ACCase subunit beta (AccD). Requires Zn(2+) as cofactor.

It localises to the cytoplasm. The enzyme catalyses N(6)-carboxybiotinyl-L-lysyl-[protein] + acetyl-CoA = N(6)-biotinyl-L-lysyl-[protein] + malonyl-CoA. Its pathway is lipid metabolism; malonyl-CoA biosynthesis; malonyl-CoA from acetyl-CoA: step 1/1. In terms of biological role, component of the acetyl coenzyme A carboxylase (ACC) complex. Biotin carboxylase (BC) catalyzes the carboxylation of biotin on its carrier protein (BCCP) and then the CO(2) group is transferred by the transcarboxylase to acetyl-CoA to form malonyl-CoA. This is Acetyl-coenzyme A carboxylase carboxyl transferase subunit beta from Desulforudis audaxviator (strain MP104C).